A 295-amino-acid polypeptide reads, in one-letter code: Bifunctional protein FolD (295 aa).

Residues 169-171 (GRS), S194, and I235 contribute to the NADP(+) site.

This sequence belongs to the tetrahydrofolate dehydrogenase/cyclohydrolase family. As to quaternary structure, homodimer.

The catalysed reaction is (6R)-5,10-methylene-5,6,7,8-tetrahydrofolate + NADP(+) = (6R)-5,10-methenyltetrahydrofolate + NADPH. It carries out the reaction (6R)-5,10-methenyltetrahydrofolate + H2O = (6R)-10-formyltetrahydrofolate + H(+). It participates in one-carbon metabolism; tetrahydrofolate interconversion. Its function is as follows. Catalyzes the oxidation of 5,10-methylenetetrahydrofolate to 5,10-methenyltetrahydrofolate and then the hydrolysis of 5,10-methenyltetrahydrofolate to 10-formyltetrahydrofolate. This chain is Bifunctional protein FolD, found in Acaryochloris marina (strain MBIC 11017).